Here is a 450-residue protein sequence, read N- to C-terminus: MRECISVHVGQAGVQIGNACWELYCLEHGIQPDGQMPSDKTIGTGDDSFNTFFSETGSGKHVPRAVYVDLEPTVVDEVRTGTYRQLFHPEQLITGKEDAANNYARGHYTIGKEIVDLVLDRIRKLADQCTGLQGFLIFHSFGGGTGSGFTSLLMERLSVDYGKKSKLEFAVYPAPQVSTAVVEPYNSILTTHTTLEHSDCAFMVDNEAIYDICRRNLDIERPTYTNLNRLIGQIVSSITASLRFDGALNVDLTEFQTNLVPYPRIHFPLVTYAPVISSEKAYHEQLTVSEITNTCFEPANQMVKCDPRHGKYMACCLLYRGDVVPKDVNAAIAAIKTKRSIQFVDWCPTGFKVGINYQPPTVVPGGDLAKVQRAVCMLSNTTAIAEAWARLDHKFDLMYAKRAFVHWYVGEGMEEGEFSEAREDLAALEKDYEEVGLDSTEADDTAGEEF.

Gln-11 is a GTP binding site. Lys-40 is modified (N6-acetyllysine). Glu-71, Ser-140, Gly-144, Thr-145, Thr-179, Asn-206, and Asn-228 together coordinate GTP. Glu-71 is a Mg(2+) binding site. Residue Glu-254 is part of the active site.

It belongs to the tubulin family. In terms of assembly, dimer of alpha and beta chains. A typical microtubule is a hollow water-filled tube with an outer diameter of 25 nm and an inner diameter of 15 nM. Alpha-beta heterodimers associate head-to-tail to form protofilaments running lengthwise along the microtubule wall with the beta-tubulin subunit facing the microtubule plus end conferring a structural polarity. Microtubules usually have 13 protofilaments but different protofilament numbers can be found in some organisms and specialized cells. Mg(2+) is required as a cofactor. Post-translationally, undergoes a tyrosination/detyrosination cycle, the cyclic removal and re-addition of a C-terminal tyrosine residue by the enzymes tubulin tyrosine carboxypeptidase (TTCP) and tubulin tyrosine ligase (TTL), respectively. In terms of processing, acetylation of alpha chains at Lys-40 stabilizes microtubules and affects affinity and processivity of microtubule motors. This modification has a role in multiple cellular functions, ranging from cell motility, cell cycle progression or cell differentiation to intracellular trafficking and signaling.

The protein resides in the cytoplasm. Its subcellular location is the cytoskeleton. The catalysed reaction is GTP + H2O = GDP + phosphate + H(+). In terms of biological role, tubulin is the major constituent of microtubules, a cylinder consisting of laterally associated linear protofilaments composed of alpha- and beta-tubulin heterodimers. Microtubules grow by the addition of GTP-tubulin dimers to the microtubule end, where a stabilizing cap forms. Below the cap, tubulin dimers are in GDP-bound state, owing to GTPase activity of alpha-tubulin. The chain is Tubulin alpha chain from Lepidoglyphus destructor (Storage mite).